A 207-amino-acid polypeptide reads, in one-letter code: Large ribosomal subunit protein uL4 (207 aa).

Residues 50 to 75 (KTKTVSEVSGTTKKPFKQKGTGNARQ) form a disordered region.

Belongs to the universal ribosomal protein uL4 family. In terms of assembly, part of the 50S ribosomal subunit.

Functionally, one of the primary rRNA binding proteins, this protein initially binds near the 5'-end of the 23S rRNA. It is important during the early stages of 50S assembly. It makes multiple contacts with different domains of the 23S rRNA in the assembled 50S subunit and ribosome. Forms part of the polypeptide exit tunnel. The chain is Large ribosomal subunit protein uL4 from Rickettsia akari (strain Hartford).